A 1226-amino-acid polypeptide reads, in one-letter code: Chromosome-associated kinesin KIF4 (1226 aa).

Residues 8–337 (PVRVALRCRP…LRYADRARKI (330 aa)) form the Kinesin motor domain. 87-94 (GQTGSGKT) is a binding site for ATP. Residues 351–1006 (ELQRLKLQVQ…YKQKLALLHV (656 aa)) adopt a coiled-coil conformation. Residues 494–505 (EAASFPVPEEDS) show a composition bias toward acidic residues. Disordered regions lie at residues 494–516 (EAASFPVPEEDSGEKRSSDGFTT), 722–741 (QRQKEAMEKRKDSQSKGMEG), and 1052–1078 (DLLSESESEEESDDKNWEPGNNSKQSK). The span at 722 to 735 (QRQKEAMEKRKDSQ) shows a compositional bias: basic and acidic residues. Residues 1007–1226 (ASGKKLHNIL…SGCSAITEDE (220 aa)) are globular. Residues 1053 to 1064 (LLSESESEEESD) are compositionally biased toward acidic residues.

It belongs to the TRAFAC class myosin-kinesin ATPase superfamily. Kinesin family. Chromokinesin subfamily. The cofactor is [2Fe-2S] cluster. [4Fe-4S] cluster serves as cofactor. In terms of tissue distribution, expressed in oocytes, eggs, testes and brain.

It localises to the nucleus. The protein resides in the chromosome. It is found in the cytoplasm. The protein localises to the cytoskeleton. Functionally, iron-sulfur (Fe-S) cluster binding motor protein that has a role in chromosome segregation during mitosis. Required for mitotic chromosomal positioning and bipolar spindle stabilization. The protein is Chromosome-associated kinesin KIF4 (kif4) of Xenopus laevis (African clawed frog).